Consider the following 357-residue polypeptide: 3-isopropylmalate dehydrogenase (357 aa).

Position 76–89 (76–89 (GYQWESLDISVRPE)) interacts with NAD(+). Substrate-binding residues include Arg-96, Arg-106, Arg-134, and Asp-224. Asp-224, Asp-248, and Asp-252 together coordinate Mg(2+). Position 282-294 (282-294 (GSAPDIAGQNIAN)) interacts with NAD(+).

It belongs to the isocitrate and isopropylmalate dehydrogenases family. LeuB type 1 subfamily. As to quaternary structure, homodimer. The cofactor is Mg(2+). Mn(2+) is required as a cofactor.

Its subcellular location is the cytoplasm. It catalyses the reaction (2R,3S)-3-isopropylmalate + NAD(+) = 4-methyl-2-oxopentanoate + CO2 + NADH. It functions in the pathway amino-acid biosynthesis; L-leucine biosynthesis; L-leucine from 3-methyl-2-oxobutanoate: step 3/4. Functionally, catalyzes the oxidation of 3-carboxy-2-hydroxy-4-methylpentanoate (3-isopropylmalate) to 3-carboxy-4-methyl-2-oxopentanoate. The product decarboxylates to 4-methyl-2 oxopentanoate. In Hydrogenovibrio crunogenus (strain DSM 25203 / XCL-2) (Thiomicrospira crunogena), this protein is 3-isopropylmalate dehydrogenase.